Here is a 475-residue protein sequence, read N- to C-terminus: Equilibrative nucleoside transporter 3 (475 aa).

The interval 1–24 is disordered; the sequence is MAVVSEDDFQHSSNSTYRTTSSSL. Over 1-53 the chain is Cytoplasmic; sequence MAVVSEDDFQHSSNSTYRTTSSSLRADQEALLEKLLDRPPPGLQRPEDRFCGT. A compositionally biased stretch (low complexity) spans 12-23; it reads SSNSTYRTTSSS. Residues serine 21 and serine 23 each carry the phosphoserine modification. The short motif at 31-32 is the Dileucine internalization motif element; it reads LL. Residues 54–74 form a helical membrane-spanning segment; that stretch reads YIIFFSLGIGSLLPWNFFITA. Topologically, residues 75–105 are extracellular; it reads KEYWMFKLRNSSSPATGEDPEGSDILNYFES. Asparagine 84 is a glycosylation site (N-linked (GlcNAc...) asparagine). A helical membrane pass occupies residues 106–126; it reads YLAVASTVPSMLCLVANFLLV. Over 127–134 the chain is Cytoplasmic; the sequence is NRVAVHIR. The helical transmembrane segment at 135 to 155 threads the bilayer; that stretch reads VLASLTVILAIFMVITALVKV. At 156-162 the chain is on the extracellular side; sequence DTSSWTR. A helical transmembrane segment spans residues 163-183; sequence GFFAVTIVCMVILSGASTVFS. Over 184–199 the chain is Cytoplasmic; the sequence is SSIYGMTGSFPMRNSQ. A helical transmembrane segment spans residues 200-220; that stretch reads ALISGGAMGGTVSAVASLVDL. The Extracellular segment spans residues 221-230; it reads AASSDVRNSA. Residues 231-251 traverse the membrane as a helical segment; it reads LAFFLTATVFLVLCMGLYLLL. Residues 252-305 are Cytoplasmic-facing; it reads SRLEYARYYMRPVLAAHVFSGEEELPQDSLSAPSVASRFIDSHTPPLRPILKKT. The chain crosses the membrane as a helical span at residues 306–326; it reads ASLGFCVTYVFFITSLIYPAI. Topologically, residues 327 to 337 are extracellular; sequence CTNIESLNKGS. Residues 338–358 traverse the membrane as a helical segment; it reads GSLWTTKFFIPLTTFLLYNFA. Topologically, residues 359–377 are cytoplasmic; that stretch reads DLCGRQLTAWIQVPGPNSK. Residues 378–398 form a helical membrane-spanning segment; sequence ALPGFVLLRTCLIPLFVLCNY. The Extracellular segment spans residues 399 to 415; it reads QPRVHLKTVVFQSDVYP. The chain crosses the membrane as a helical span at residues 416–436; sequence ALLSSLLGLSNGYLSTLALLY. Over 437-454 the chain is Cytoplasmic; that stretch reads GPKIVPRELAEATGVVMS. Residues 455-475 traverse the membrane as a helical segment; the sequence is FYVCLGLTLGSACSTLLVHLI.

It belongs to the SLC29A/ENT transporter (TC 2.A.57) family. In terms of tissue distribution, widely expressed in both adult and fetal tissues. Highest levels in placenta, uterus, ovary, spleen, lymph node and bone marrow. Expressed in liver. Lowest levels in brain and heart. Expressed in macrophages.

It localises to the lysosome membrane. Its subcellular location is the late endosome membrane. The protein localises to the mitochondrion membrane. The protein resides in the cell membrane. It catalyses the reaction adenosine(in) = adenosine(out). The catalysed reaction is guanosine(in) = guanosine(out). It carries out the reaction inosine(in) = inosine(out). The enzyme catalyses uridine(out) = uridine(in). It catalyses the reaction cytidine(in) = cytidine(out). The catalysed reaction is thymidine(in) = thymidine(out). It carries out the reaction 2'-deoxyadenosine(in) = 2'-deoxyadenosine(out). The enzyme catalyses 2'-deoxycytidine(in) = 2'-deoxycytidine(out). It catalyses the reaction guanine(out) = guanine(in). The catalysed reaction is uracil(in) = uracil(out). It carries out the reaction (R)-noradrenaline(out) = (R)-noradrenaline(in). The enzyme catalyses dopamine(out) = dopamine(in). It catalyses the reaction serotonin(out) = serotonin(in). The catalysed reaction is tyramine(in) = tyramine(out). It carries out the reaction ATP(in) = ATP(out). Functionally, uniporter that mediates the facilitative transport of nucleoside across lysosomal and mitochondrial membranes. Functions as a non-electrogenic Na(+)-independent transporter. Substrate transport is pH-dependent and enhanced under acidic condition, probably reflecting the location of the transporter in acidic intracellular compartments. Proton is not a cotransporting ion but most likely change the ionization state of the transporter which dictates transport-permissible/impermissible conformation for nucleoside translocation. May direct the nucleoside transport from lysosomes to cytosol or cytosol to mitochondria to facilitate the fundamental function of salvage synthesis of nucleic acids. Involved in the transport of nucleosides (adenosine, guanosine, uridine, thymidine, cytidine and inosine) and deoxynucleosides (deoxyadenosine, deoxycytidine). Also mediates transport of purine nucleobases (adenine, guanine) and pyrimidine nucleobases (uracil). Also able to transport monoamine neurotransmitters dopamine, serotonin, noradrenaline and tyramine. Capable of transporting ATP. Mediates nucleoside export from lysosomes in macrophages, which regulates macrophage functions and numbers. The protein is Equilibrative nucleoside transporter 3 of Homo sapiens (Human).